A 457-amino-acid chain; its full sequence is 3-isopropylmalate dehydratase large subunit (457 aa).

The [4Fe-4S] cluster site is built by Cys-337, Cys-397, and Cys-400.

This sequence belongs to the aconitase/IPM isomerase family. LeuC type 1 subfamily. Heterodimer of LeuC and LeuD. [4Fe-4S] cluster is required as a cofactor.

It carries out the reaction (2R,3S)-3-isopropylmalate = (2S)-2-isopropylmalate. It functions in the pathway amino-acid biosynthesis; L-leucine biosynthesis; L-leucine from 3-methyl-2-oxobutanoate: step 2/4. Functionally, catalyzes the isomerization between 2-isopropylmalate and 3-isopropylmalate, via the formation of 2-isopropylmaleate. This Oenococcus oeni (strain ATCC BAA-331 / PSU-1) protein is 3-isopropylmalate dehydratase large subunit.